Here is a 253-residue protein sequence, read N- to C-terminus: MPSVDLNSDLAEGFGIWHLTEDEALMDIVSSANIACGLHAGDPEIMAKAFAYAKSRGVAVGAHPGFPDLWGFGRRRMPFTPGEIERLVAYQVGAAQALATYSGHRITYVKVHGALGNIAEQEPEVAVAVANAVKAVDPSLVVLAGPLGAQAPATRDAGLRLAAEIFADRGYTEQGHLIPRSQPGAMIHDPVAAADRIIAMVQSGAVITAQGTHLPTSIDSICVHGDGPKAVETARYVRERLEAAGIAIAPFAP.

It belongs to the LamB/PxpA family. As to quaternary structure, forms a complex composed of PxpA, PxpB and PxpC.

The enzyme catalyses 5-oxo-L-proline + ATP + 2 H2O = L-glutamate + ADP + phosphate + H(+). Its function is as follows. Catalyzes the cleavage of 5-oxoproline to form L-glutamate coupled to the hydrolysis of ATP to ADP and inorganic phosphate. The polypeptide is 5-oxoprolinase subunit A (Azorhizobium caulinodans (strain ATCC 43989 / DSM 5975 / JCM 20966 / LMG 6465 / NBRC 14845 / NCIMB 13405 / ORS 571)).